The following is a 236-amino-acid chain: Small ribosomal subunit protein uS2c (236 aa).

The protein belongs to the universal ribosomal protein uS2 family.

It localises to the plastid. It is found in the chloroplast. The polypeptide is Small ribosomal subunit protein uS2c (rps2) (Cucumis sativus (Cucumber)).